The following is a 58-amino-acid chain: Protein translocase subunit SecE (58 aa).

A helical membrane pass occupies residues 36 to 56 (ILLIGFIGFLMFAIMSLLPGV).

The protein belongs to the SecE/SEC61-gamma family. As to quaternary structure, component of the Sec protein translocase complex. Heterotrimer consisting of SecY (alpha), SecG (beta) and SecE (gamma) subunits. The heterotrimers can form oligomers, although 1 heterotrimer is thought to be able to translocate proteins. Interacts with the ribosome. May interact with SecDF, and other proteins may be involved.

The protein resides in the cell membrane. Its function is as follows. Essential subunit of the Sec protein translocation channel SecYEG. Clamps together the 2 halves of SecY. May contact the channel plug during translocation. The protein is Protein translocase subunit SecE of Halorubrum lacusprofundi (strain ATCC 49239 / DSM 5036 / JCM 8891 / ACAM 34).